Here is a 623-residue protein sequence, read N- to C-terminus: Interleukin-27 receptor subunit alpha (623 aa).

The N-terminal stretch at 1–24 is a signal peptide; it reads MNRLRVARLTPLELLLSLMSLLLG. At 25 to 510 the chain is on the extracellular side; sequence TRPHGSPGPL…HLPDNRIRWK (486 aa). 2 Fibronectin type-III domains span residues 30 to 124 and 125 to 225; these read SPGP…MKPD and TPQI…TPFL. N-linked (GlcNAc...) asparagine glycosylation is present at asparagine 46. Residues 211-215 carry the WSXWS motif motif; sequence WGEWS. N-linked (GlcNAc...) asparagine glycans are attached at residues asparagine 296, asparagine 305, asparagine 360, asparagine 368, and asparagine 461. 2 Fibronectin type-III domains span residues 316–412 and 413–505; these read APCD…VPLA and GPAV…LPDN. A helical membrane pass occupies residues 511–531; the sequence is ALPWFLSLWGLLLMGCGLSLA. Topologically, residues 532–623 are cytoplasmic; sequence STRCLQARCL…PTPEELGLLV (92 aa). The short motif at 552–560 is the Box 1 motif element; sequence IWERVPDPA.

The protein belongs to the type I cytokine receptor family. Type 2 subfamily. As to expression, expressed in CD4+ and CD8+ T-cells, B-cells, natural killer cells and macrophages. Highest levels in CD4+ T-cells and natural killer cells. Expression highest in Th0 cells.

Its subcellular location is the membrane. Its function is as follows. Receptor for IL27. Requires IL6ST/GP130 to mediate signal transduction in response to IL27. This signaling system acts through STAT3 and STAT1. Involved in the regulation of Th1-type immune responses. Also appears to be involved in innate defense mechanisms. The polypeptide is Interleukin-27 receptor subunit alpha (Il27ra) (Mus musculus (Mouse)).